Consider the following 1299-residue polypeptide: DNA-directed RNA polymerase subunit beta' (1299 aa).

Positions 60, 62, 75, and 78 each coordinate Zn(2+). Residues 188-209 (GAKSDQKRRAKDGAEKEMGQTR) form a disordered region. The Mg(2+) site is built by Asp535, Asp537, and Asp539. The Zn(2+) site is built by Cys882, Cys959, Cys966, and Cys969.

This sequence belongs to the RNA polymerase beta' chain family. The RNAP catalytic core consists of 2 alpha, 1 beta, 1 beta' and 1 omega subunit. When a sigma factor is associated with the core the holoenzyme is formed, which can initiate transcription. Mg(2+) serves as cofactor. It depends on Zn(2+) as a cofactor.

The enzyme catalyses RNA(n) + a ribonucleoside 5'-triphosphate = RNA(n+1) + diphosphate. Functionally, DNA-dependent RNA polymerase catalyzes the transcription of DNA into RNA using the four ribonucleoside triphosphates as substrates. This Clavibacter michiganensis subsp. michiganensis (strain NCPPB 382) protein is DNA-directed RNA polymerase subunit beta'.